Here is a 558-residue protein sequence, read N- to C-terminus: Phosphatidylserine lipase ABHD16A (558 aa).

A run of 2 helical transmembrane segments spans residues 60–80 (ILAL…FAFF) and 93–113 (VVPF…VACL). At 114 to 558 (RGIGRWTNPQ…AQNFQMPWHL (445 aa)) the chain is on the cytoplasmic side. The AB hydrolase-1 domain occupies 281-407 (LVICCEGNAG…LVTRTVRQHL (127 aa)). Catalysis depends on charge relay system residues S355, D430, and H507.

It belongs to the AB hydrolase superfamily. ABHD16 family.

The protein localises to the membrane. It catalyses the reaction 1-heptadecanoyl-2-(5Z,8Z,11Z,14Z-eicosatetraenoyl)-sn-glycero-3-phosphoserine + H2O = 1-heptadecanoyl-sn-glycero-3-phosphoserine + (5Z,8Z,11Z,14Z)-eicosatetraenoate + H(+). It carries out the reaction 1-hexadecanoyl-2-(9Z-octadecenoyl)-sn-glycero-3-phospho-L-serine + H2O = 1-hexadecanoyl-sn-glycero-3-phospho-L-serine + (9Z)-octadecenoate + H(+). The enzyme catalyses 1-octadecanoyl-2-(9Z,12Z-octadecadienoyl)-sn-glycero-3-phosphoserine + H2O = 1-octadecanoyl-sn-glycero-3-phosphoserine + (9Z,12Z)-octadecadienoate + H(+). The catalysed reaction is 1-heptadecanoyl-2-(5Z,8Z,11Z,14Z-eicosatetraenoyl)-sn-glycero-3-phosphocholine + H2O = 1-heptadecanoyl-sn-glycero-3-phosphocholine + (5Z,8Z,11Z,14Z)-eicosatetraenoate + H(+). It catalyses the reaction 1-hexadecanoyl-2-(9Z-octadecenoyl)-sn-glycero-3-phosphoglycerol + H2O = 1-hexadecanoyl-sn-glycero-3-phosphoglycerol + (9Z)-octadecenoate + H(+). It carries out the reaction 1-hexadecanoyl-2-(9Z-octadecenoyl)-sn-glycero-3-phospho-(1D-myo-inositol) + H2O = 1-hexadecanoyl-sn-glycero-3-phospho-(1D-myo-inositol) + (9Z)-octadecenoate + H(+). The enzyme catalyses 1-heptadecanoyl-2-(5Z,8Z,11Z,14Z-eicosatetraenoyl)-sn-glycero-3-phosphoethanolamine + H2O = 1-heptadecanoyl-sn-glycero-3-phosphoethanolamine + (5Z,8Z,11Z,14Z)-eicosatetraenoate + H(+). The catalysed reaction is 1-hexadecanoyl-2-(9Z-octadecenoyl)-sn-glycero-3-phospho-(1'-sn-glycerol) + H2O = 1-hexadecanoyl-sn-glycero-3-phospho-(1'-sn-glycerol) + (9Z)-octadecenoate + H(+). It catalyses the reaction Hydrolyzes glycerol monoesters of long-chain fatty acids.. It carries out the reaction 1-tetradecanoylglycerol + H2O = tetradecanoate + glycerol + H(+). The enzyme catalyses 2-hexadecanoylglycerol + H2O = glycerol + hexadecanoate + H(+). The catalysed reaction is 1-(9Z-octadecenoyl)-glycerol + H2O = glycerol + (9Z)-octadecenoate + H(+). It catalyses the reaction 2-(9Z-octadecenoyl)-glycerol + H2O = glycerol + (9Z)-octadecenoate + H(+). It carries out the reaction 2-(9Z,12Z-octadecadienoyl)-glycerol + H2O = (9Z,12Z)-octadecadienoate + glycerol + H(+). The enzyme catalyses 1-(5Z,8Z,11Z,14Z-eicosatetraenoyl)-glycerol + H2O = glycerol + (5Z,8Z,11Z,14Z)-eicosatetraenoate + H(+). The catalysed reaction is 2-(5Z,8Z,11Z,14Z-eicosatetraenoyl)-glycerol + H2O = glycerol + (5Z,8Z,11Z,14Z)-eicosatetraenoate + H(+). It catalyses the reaction prostaglandin D2-1-glycerol ester + H2O = prostaglandin D2 + glycerol + H(+). It carries out the reaction 2-glyceryl-15-deoxy-Delta(12,14)-prostaglandin J2 + H2O = 15-deoxy-Delta(12,14)-prostaglandin J2 + glycerol + H(+). The enzyme catalyses 1-(9Z,12Z-octadecadienoyl)-glycerol + H2O = (9Z,12Z)-octadecadienoate + glycerol + H(+). Its function is as follows. Phosphatidylserine (PS) lipase that mediates the hydrolysis of phosphatidylserine to generate lysophosphatidylserine (LPS). LPS constitutes a class of signaling lipids that regulates immunological and neurological processes. Has no activity towards diacylglycerol, triacylglycerol or lysophosphatidylserine lipase. Also has monoacylglycerol lipase activity, with preference for 1-(9Z,12Z-octadecadienoyl)-glycerol (1-LG) and 2-glyceryl-15-deoxy-Delta(12,14)-prostaglandin J2 (15d-PGJ(2)-G). The chain is Phosphatidylserine lipase ABHD16A from Macaca fascicularis (Crab-eating macaque).